We begin with the raw amino-acid sequence, 199 residues long: Recombination protein RecR (199 aa).

A C4-type zinc finger spans residues 58 to 73; that stretch reads CKTCGNIDTQSPCTVC. Residues 81-176 enclose the Toprim domain; it reads AMIVVVADVA…KVTRLAHGVP (96 aa).

It belongs to the RecR family.

In terms of biological role, may play a role in DNA repair. It seems to be involved in an RecBC-independent recombinational process of DNA repair. It may act with RecF and RecO. The sequence is that of Recombination protein RecR from Bradyrhizobium sp. (strain ORS 278).